A 184-amino-acid polypeptide reads, in one-letter code: GTP cyclohydrolase 1 (184 aa).

Residues Cys-75, His-78, and Cys-146 each coordinate Zn(2+).

Belongs to the GTP cyclohydrolase I family. Homomer.

It catalyses the reaction GTP + H2O = 7,8-dihydroneopterin 3'-triphosphate + formate + H(+). It participates in cofactor biosynthesis; 7,8-dihydroneopterin triphosphate biosynthesis; 7,8-dihydroneopterin triphosphate from GTP: step 1/1. In Streptococcus pneumoniae (strain Hungary19A-6), this protein is GTP cyclohydrolase 1.